The chain runs to 475 residues: Aspartyl/glutamyl-tRNA(Asn/Gln) amidotransferase subunit B (475 aa).

It belongs to the GatB/GatE family. GatB subfamily. In terms of assembly, heterotrimer of A, B and C subunits.

The catalysed reaction is L-glutamyl-tRNA(Gln) + L-glutamine + ATP + H2O = L-glutaminyl-tRNA(Gln) + L-glutamate + ADP + phosphate + H(+). The enzyme catalyses L-aspartyl-tRNA(Asn) + L-glutamine + ATP + H2O = L-asparaginyl-tRNA(Asn) + L-glutamate + ADP + phosphate + 2 H(+). Its function is as follows. Allows the formation of correctly charged Asn-tRNA(Asn) or Gln-tRNA(Gln) through the transamidation of misacylated Asp-tRNA(Asn) or Glu-tRNA(Gln) in organisms which lack either or both of asparaginyl-tRNA or glutaminyl-tRNA synthetases. The reaction takes place in the presence of glutamine and ATP through an activated phospho-Asp-tRNA(Asn) or phospho-Glu-tRNA(Gln). This Clostridium novyi (strain NT) protein is Aspartyl/glutamyl-tRNA(Asn/Gln) amidotransferase subunit B.